The chain runs to 653 residues: Extracellular metalloproteinase (653 aa).

The first 19 residues, 1 to 19 (MRSFLLASLASLSVISVYG), serve as a signal peptide directing secretion. The propeptide occupies 20–244 (HPHARSTLTR…VHAVVDYSAD (225 aa)). N-linked (GlcNAc...) asparagine glycans are attached at residues Asn-327, Asn-336, and Asn-412. Position 429 (His-429) interacts with Zn(2+). The active site involves Glu-430. Zn(2+) is bound at residue His-433. N-linked (GlcNAc...) asparagine glycans are attached at residues Asn-636 and Asn-637.

This sequence belongs to the peptidase M36 family. The cofactor is Zn(2+).

The protein localises to the secreted. Secreted metalloproteinase that allows assimilation of proteinaceous substrates. This chain is Extracellular metalloproteinase (MEP), found in Pyrenophora tritici-repentis (strain Pt-1C-BFP) (Wheat tan spot fungus).